The chain runs to 824 residues: E3 ubiquitin-protein ligase TRIM71 (824 aa).

An RING-type zinc finger spans residues 23 to 93 (CPLCKELCGC…PLKLRCPTCD (71 aa)). Residues 37–56 (SSNSSTSSSSSQTSNSSSTS) form a disordered region. Residues 147-194 (LSDPQCSSCDEGNPATSHCLDCQEYLCDNCVRAHQRVRLTKDHFIEGL) form a B box-type 1; atypical zinc finger. Residues C152, C155, C176, H180, C234, H237, C257, and H262 each contribute to the Zn(2+) site. The B box-type 2 zinc finger occupies 229–270 (ERMDFCQHHDDAVLRFFCDSCTVPICRECSLGRHAGHSFTYL). A coiled-coil region spans residues 293 to 321 (QAIQLSIEKAQAIAEQVELKAKVVQSEVK). One copy of the Filamin repeat lies at 435–536 (SSGAFATASK…IEGSPFKVMV (102 aa)). NHL repeat units follow at residues 549–592 (MASF…FKPC), 596–639 (HHKF…FTFD), 643–686 (LLKF…FGPD), 690–733 (LNKY…IRPD), 737–780 (ARFL…FEPN), and 784–824 (LCKF…ILMF).

This sequence belongs to the TRIM/RBCC family.

It localises to the cytoplasm. It is found in the P-body. The enzyme catalyses S-ubiquitinyl-[E2 ubiquitin-conjugating enzyme]-L-cysteine + [acceptor protein]-L-lysine = [E2 ubiquitin-conjugating enzyme]-L-cysteine + N(6)-ubiquitinyl-[acceptor protein]-L-lysine.. The protein operates within protein modification; protein ubiquitination. Functionally, E3 ubiquitin-protein ligase that cooperates with the microRNAs (miRNAs) machinery and promotes embryonic stem cells proliferation and maintenance. Binds to miRNAs and participates in post-transcriptional repression of transcripts. Required to maintain proliferation and prevent premature differentiation of neural progenitor cells during early neural development. The polypeptide is E3 ubiquitin-protein ligase TRIM71 (trim71) (Danio rerio (Zebrafish)).